The chain runs to 405 residues: uncharacterized protein (405 aa).

12 consecutive transmembrane segments (helical) span residues 32–52 (MFVLTLVLFALARFSSPVLAG), 53–73 (WLTFAAIVPGLIVSPLAGVLL), 84–104 (IDMIASTAFITAISLAGWLGW), 108–128 (PVVCTLAMLFSLAGPLGIAGI), 150–170 (AVYSIVDVVGPAMAGGLVGWL), 171–191 (GPEAAMSLIAAACAGAAVCLS), 237–257 (WGALHVVIPVFVAGNYTVAAG), 260–280 (VVGLLWALVGIAGGVGALLAG), 291–311 (IMTAGMAVTAFATWPIAAEFG), 314–334 (GLTIGLLLAGAMSGPIDVAML), 352–372 (ISISVNQAGFPLGAAIAGVVI), and 378–398 (AIFVLAGITSVLAAIATLSIP).

The protein belongs to the major facilitator superfamily.

It is found in the cell membrane. This is an uncharacterized protein from Sinorhizobium fredii (strain NBRC 101917 / NGR234).